The following is an 87-amino-acid chain: Cytochrome c5 (87 aa).

Positions 19, 22, 23, and 63 each coordinate heme. Cysteines 69 and 72 form a disulfide.

This sequence belongs to the cytochrome c family. Homodimer. Post-translationally, binds 1 heme group per subunit.

In terms of biological role, it is unreactive with cytochrome c reductase or oxidase but seems to function as an intermediate in nitrate respiration of facultative anaerobic pseudmonads. This is Cytochrome c5 from Ectopseudomonas mendocina (Pseudomonas mendocina).